Here is a 227-residue protein sequence, read N- to C-terminus: Urease subunit gamma/beta (227 aa).

A urease gamma region spans residues 1 to 101; sequence MRLTPTERDR…LAVVTDPIGG (101 aa). Positions 102 to 227 are urease beta; sequence GLGDQAPGAL…ACGYLGVEQR (126 aa).

This sequence in the N-terminal section; belongs to the urease gamma subunit family. The protein in the C-terminal section; belongs to the urease beta subunit family. In terms of assembly, heterohexamer of 3 UreC (alpha) and 3 UreAB (gamma/beta) subunits.

The protein resides in the cytoplasm. The enzyme catalyses urea + 2 H2O + H(+) = hydrogencarbonate + 2 NH4(+). The protein operates within nitrogen metabolism; urea degradation; CO(2) and NH(3) from urea (urease route): step 1/1. This Streptomyces avermitilis (strain ATCC 31267 / DSM 46492 / JCM 5070 / NBRC 14893 / NCIMB 12804 / NRRL 8165 / MA-4680) protein is Urease subunit gamma/beta.